Reading from the N-terminus, the 450-residue chain is Cell division cycle 20.5, cofactor of APC complex (450 aa).

WD repeat units follow at residues 129–166 (ADDFYLNLLDWGSSNVLAIALGDTVYLWDASSGSTYKL), 171–210 (EEEGPVTSINWTQDGLDLAIGLDNSEVQLWDCVSNRQVRT), 214–251 (GHESRVGSLAWNNHILTTGGMDGKIVNNDVRIRSSIVE), 255–294 (GHTEEVCGLKWSESGKKLASGGNDNVVHIWDHRSVASSNP), 304–346 (EHTA…CLNS), 348–389 (ETGS…KMAE), and 392–431 (GHTSRVLFMAQSPDGCTVASAAGDETLRLWNVFGEPPKTT).

Belongs to the WD repeat CDC20/Fizzy family. In terms of assembly, the APC/C is composed of at least 11 subunits that stay tightly associated throughout the cell cycle. Binds to GIG1 and PYM. Part of the mitotic checkpoint complex (MCC); interacts with MAD2 and BUB1.

The protein localises to the nucleus. It participates in protein modification; protein ubiquitination. Its function is as follows. Component of the anaphase promoting complex/cyclosome (APC/C), a cell cycle-regulated E3 ubiquitin-protein ligase complex that controls progression through mitosis and the G1 phase of the cell cycle. In Arabidopsis thaliana (Mouse-ear cress), this protein is Cell division cycle 20.5, cofactor of APC complex (CDC20-5).